We begin with the raw amino-acid sequence, 396 residues long: Elongation factor Tu (396 aa).

The region spanning 10 to 205 (KPHVNIGTIG…ACDDNIPDPV (196 aa)) is the tr-type G domain. Positions 19-26 (GHVDHGKT) are G1. Residue 19-26 (GHVDHGKT) participates in GTP binding. Thr-26 contacts Mg(2+). The tract at residues 62-66 (GITIN) is G2. Residues 83 to 86 (DAPG) form a G3 region. Residues 83–87 (DAPGH) and 138–141 (NKCD) contribute to the GTP site. The tract at residues 138-141 (NKCD) is G4. The segment at 175–177 (SAL) is G5.

The protein belongs to the TRAFAC class translation factor GTPase superfamily. Classic translation factor GTPase family. EF-Tu/EF-1A subfamily. In terms of assembly, monomer.

Its subcellular location is the cytoplasm. The catalysed reaction is GTP + H2O = GDP + phosphate + H(+). Functionally, GTP hydrolase that promotes the GTP-dependent binding of aminoacyl-tRNA to the A-site of ribosomes during protein biosynthesis. This chain is Elongation factor Tu, found in Corynebacterium glutamicum (strain R).